We begin with the raw amino-acid sequence, 431 residues long: Serine--tRNA ligase (431 aa).

The segment at 41–66 (QSRTQELQAERNARSKSIGEAARRGE) is disordered. L-serine is bound at residue 240-242 (TSE). 271–273 (RSE) lines the ATP pocket. Residue E294 coordinates L-serine. An ATP-binding site is contributed by 358-361 (EISS). S392 serves as a coordination point for L-serine.

The protein belongs to the class-II aminoacyl-tRNA synthetase family. Type-1 seryl-tRNA synthetase subfamily. In terms of assembly, homodimer. The tRNA molecule binds across the dimer.

Its subcellular location is the cytoplasm. The catalysed reaction is tRNA(Ser) + L-serine + ATP = L-seryl-tRNA(Ser) + AMP + diphosphate + H(+). It catalyses the reaction tRNA(Sec) + L-serine + ATP = L-seryl-tRNA(Sec) + AMP + diphosphate + H(+). It participates in aminoacyl-tRNA biosynthesis; selenocysteinyl-tRNA(Sec) biosynthesis; L-seryl-tRNA(Sec) from L-serine and tRNA(Sec): step 1/1. Its function is as follows. Catalyzes the attachment of serine to tRNA(Ser). Is also able to aminoacylate tRNA(Sec) with serine, to form the misacylated tRNA L-seryl-tRNA(Sec), which will be further converted into selenocysteinyl-tRNA(Sec). This chain is Serine--tRNA ligase, found in Aeromonas hydrophila subsp. hydrophila (strain ATCC 7966 / DSM 30187 / BCRC 13018 / CCUG 14551 / JCM 1027 / KCTC 2358 / NCIMB 9240 / NCTC 8049).